A 646-amino-acid polypeptide reads, in one-letter code: Cysteine-rich receptor-like protein kinase 37 (646 aa).

Positions 1-26 (MGKSCVVTSSFSLLLLFLQTLKYVHA) are cleaved as a signal peptide. Gnk2-homologous domains lie at 27–132 (GFIC…NHST) and 142–252 (TINP…LYPY). Over 27–287 (GFICYGDFFN…RDEKSFQGSN (261 aa)) the chain is Extracellular. Residues Asn-62, Asn-129, Asn-169, and Asn-180 are each glycosylated (N-linked (GlcNAc...) asparagine). A helical membrane pass occupies residues 288–308 (IAIIVVPSVINLIIFVVLIFS). Over 309–646 (WKRKQSHTII…LTRPSLSLGH (338 aa)) the chain is Cytoplasmic. A Protein kinase domain is found at 345–626 (FSLENKLGQG…LFWLERHATI (282 aa)). Residues 351-359 (LGQGGFGSV) and Lys-373 contribute to the ATP site. Tyr-418 bears the Phosphotyrosine mark. Asp-470 acts as the Proton acceptor in catalysis. At Ser-474 the chain carries Phosphoserine. The residue at position 510 (Thr-510) is a Phosphothreonine. Phosphotyrosine is present on Tyr-518.

This sequence belongs to the protein kinase superfamily. Ser/Thr protein kinase family. CRK subfamily.

It is found in the membrane. It catalyses the reaction L-seryl-[protein] + ATP = O-phospho-L-seryl-[protein] + ADP + H(+). The catalysed reaction is L-threonyl-[protein] + ATP = O-phospho-L-threonyl-[protein] + ADP + H(+). This chain is Cysteine-rich receptor-like protein kinase 37 (CRK37), found in Arabidopsis thaliana (Mouse-ear cress).